The chain runs to 1040 residues: BEM1-interacting protein 2 (1040 aa).

A disordered region spans residues 1 to 39 (MSNDREVPTLSQLNTTVSRDKDVSDTLSPDFDSKGSATG). Residues 8-17 (PTLSQLNTTV) show a composition bias toward polar residues. Ser18, Ser24, and Ser28 each carry phosphoserine. The SH3 domain occupies 43-107 (GNFPMYIAIN…PVVFTQKITV (65 aa)). Residues 266-330 (WSPEEITAYF…FKEIEKIKEA (65 aa)) enclose the SAM domain. Disordered stretches follow at residues 365-412 (YRGH…SQEA), 437-478 (VSPR…WQSP), and 491-744 (IDQY…ARPV). Over residues 372 to 397 (TSQSLEDLPSQQNFIPTPRNTRNSSA) the composition is skewed to polar residues. The segment covering 444 to 457 (KPPSYPSPAQPPKS) has biased composition (pro residues). Residue Ser450 is modified to Phosphoserine. Over residues 459 to 478 (LLNNTRTSPSPAQLYSWQSP) the composition is skewed to polar residues. The segment covering 495-505 (SSSDSNFNSRS) has biased composition (low complexity). Phosphoserine occurs at positions 519, 523, and 546. Positions 557–570 (SSDRKSSCSSHEEE) are enriched in basic and acidic residues. The span at 573–598 (QETMNTFERPTSSIYADGSTIASISN) shows a compositional bias: polar residues. Over residues 600-609 (KLAHEKEGKK) the composition is skewed to basic and acidic residues. Over residues 632–648 (LKRSSSASRTSSFKKSS) the composition is skewed to low complexity. Ser652 carries the post-translational modification Phosphoserine. A compositionally biased stretch (polar residues) spans 654–684 (FRQQFTDNAARSSSPEENPITSMPSEKNSSP). Basic residues predominate over residues 690–701 (SSKKSRSKRRSV). Residues 702 to 732 (SAKEAEIFTETVKDDKNKRSASEAIKGETLK) show a composition bias toward basic and acidic residues. The PH domain occupies 768–887 (DADFSGWMSK…WMAALIKTTI (120 aa)). Residues 943-957 (QLQQQQHDNNQGQAD) are compositionally biased toward low complexity. Disordered regions lie at residues 943-986 (QLQQ…NNTT) and 1007-1040 (VARN…TDKI). Positions 973–986 (TISTPNLSSANNTT) are enriched in polar residues. The span at 1015–1024 (GTEKKGKFST) shows a compositional bias: basic and acidic residues.

As to quaternary structure, interacts with BEM1. Interacts with TOS7.

The protein resides in the bud. It is found in the bud neck. Functionally, protein involved in bud formation. Functions redundantly with BOI1 to promote the fusion of secretory vesicles with the plasma membrane at sites of polarized growth. Acts as an abscission inhibitor during cytokinesis in response to chromatin bridges. The protein is BEM1-interacting protein 2 of Saccharomyces cerevisiae (strain ATCC 204508 / S288c) (Baker's yeast).